The primary structure comprises 78 residues: MKGTFLICLILIAGFSFKSTQAGSICLEPKVVGPCTAYFRRFYFDSETGKCTVFIYGGCEGNGNNFETLRACRAICRA.

An N-terminal signal peptide occupies residues 1–22 (MKGTFLICLILIAGFSFKSTQA). One can recognise a BPTI/Kunitz inhibitor domain in the interval 26–76 (CLEPKVVGPCTAYFRRFYFDSETGKCTVFIYGGCEGNGNNFETLRACRAIC). 3 disulfide bridges follow: cysteine 26–cysteine 76, cysteine 35–cysteine 59, and cysteine 51–cysteine 72.

The protein belongs to the venom Kunitz-type family. Sea anemone type 2 potassium channel toxin subfamily.

The protein localises to the secreted. It localises to the nematocyst. This protease inhibitor shows two different activities, it inhibits both the capsaicin receptor TRPV1 and serine proteases. It partially (max 50%) and reversibly inhibits capsaicin-induced response of TRPV1 (IC(50)=54 nM), a receptor of the pain pathway. The second activity is a weak inhibition of trypsin and chymotrypsin activity (Ki=1 uM and Ki=5 uM, respectively). In vivo, it shows antinociceptive and analgesic activities. It significantly prolongs tail-flick latency and reduces capsaicin-induced acute pain. In vivo, unlike other TRPV1 antagonists whose activity is associated with hyperthermia, this protein has the remarkable feature of dropping core body temperature. In Radianthus crispa (Leathery sea anemone), this protein is TauPI-stichotoxin-Hcr2b.